Consider the following 901-residue polypeptide: Modifier of cell death (901 aa).

Disordered stretches follow at residues alanine 147 to alanine 169 and proline 218 to proline 245. The C2H2-type zinc finger occupies phenylalanine 259 to histidine 282. Disordered regions lie at residues lysine 494–proline 528, glutamine 682–glutamate 717, and histidine 779–asparagine 901. A compositionally biased stretch (low complexity) spans glutamate 817–glutamate 828. Positions methionine 829–proline 840 are enriched in acidic residues. Basic and acidic residues predominate over residues glutamine 846–lysine 866.

Promotes programmed cell death. Its role in programmed cell death may be in conjunction with cell cycle regulatory factor efl-1 and the synthetic multivulva class B proteins dpl-1 and lin-35, and is independent of the ced-1, ced-8 and ced-9 pathways. The sequence is that of Modifier of cell death from Caenorhabditis elegans.